The primary structure comprises 237 residues: Class B acid phosphatase (237 aa).

Positions 1-23 (MKKITLALSAVCLLFTLNHSANA) are cleaved as a signal peptide. The active-site Nucleophile is the aspartate 69. Positions 69 and 71 each coordinate Mg(2+). Catalysis depends on aspartate 71, which acts as the Proton donor. Substrate contacts are provided by residues 137–138 (TG) and lysine 177. Aspartate 192 is a Mg(2+) binding site.

The protein belongs to the class B bacterial acid phosphatase family. As to quaternary structure, homotetramer. The cofactor is Mg(2+).

The protein resides in the periplasm. The enzyme catalyses a phosphate monoester + H2O = an alcohol + phosphate. Dephosphorylates several organic phosphate monoesters including monophosphate nucleotides (NMPs), coenzyme A (CoA), nicotinamide adenine dinucleotide phosphate (NADP), flavin mononucleotide (FMN) and phosphorylated 5-6 carbon sugars in vitro. Also has a phosphotransferase activity catalyzing the transfer of low-energy phosphate groups from organic phosphate monoesters to free hydroxyl groups of various organic compounds. In Salmonella typhi, this protein is Class B acid phosphatase (aphA).